A 1018-amino-acid polypeptide reads, in one-letter code: MNEPGSTFGAGEAPEERLRALLQHVGHFLPAQGPIGVFVHHNTLHAFQHLPFHDALAAASALFEAEPYLSEAEFRAHIASGRIDDQDIEAALAERFAETPDERRGPLSRIEIERLALRFPIETATQAGLGWRIAETGATRELRPDLPSGPYHRLLVYTERWLAERPHAAARLLDQGGRDPESRAALALWDACRGVPLPPTEPAEPPLVDRVGVDRSHRDLLLAITGEDPAELIDPPFIRLLGAYLDEGVAHWAMPDRAQGLFRAFRGLVLEGSRPAGAHFAGLDAELRAIGANMPPAAVAVAALRDLGVAEQRWEGYVTRVLLELPGWAGMVHRFEHTPSDRPAGAPPASLLEYLAVRLTLARYALRDVARRRLGYRGPLAGLVEHARRAARPVEPPPRSPDGDRPFRLFQLAQLAGLSVAQIQPLSAADRVWALEVLEGLDEMARRRLLHEAYEHHHRVEVLHGIAANLRRPEDERAVRSPRFQVALCIDDRCEGLRRHFEELSPRHETLGIAGFFGVPIRYRGLDDAGHASLCPVNVAPAHEIVERPREEGAALVRKARRRRWARFVHALGHGTRTLSRGVLLTPTLGLFSTIPLVGRTLFPRAYARLRRAFERRLLPAVPTQLHSPHEEGTAQGRGGAAFTASEKAARVAATLEIMGLTRRFAPLVVMLGHGSISVNNPHQSAYDCGACGGRHGGPNARLFAAMANDREVRAQLRERGIDIPDGTFFLGGMNNTTTEEIVLYDDHLAPASHRGEIAALKDALGEARKRHAHERCRRFASAPARLSPEQALAHVEARAVDLSEARPELGHATNAVCVIGRRELTRGLFLDRRVFLVSYDPTQDPSGAILERVLLSAGPVGAGINLEYYFSRVDNLRYGAGTKLPHNLASLLGVMDGALSDLRTGLPKQMIEIHEPVRMLTVVETSTETAAAICARQPALRELIHNGWIQLACLDPATGQIARFTRGAFAPFTPPERPLPEVARSLDWYAGKSGFVPPAIIRATPSRPSLEIADHAA.

Residues C489, D491, H674, and C689 each contribute to the Zn(2+) site.

It belongs to the inorganic carbon transporter (TC 9.A.2) DabA family. As to quaternary structure, forms a complex with DabB. Zn(2+) serves as cofactor.

The protein localises to the cell inner membrane. Functionally, part of an energy-coupled inorganic carbon pump. In Sorangium cellulosum (strain So ce56) (Polyangium cellulosum (strain So ce56)), this protein is Probable inorganic carbon transporter subunit DabA 2.